We begin with the raw amino-acid sequence, 333 residues long: Protein RecA (333 aa).

69 to 76 (GPESSGKT) contacts ATP.

The protein belongs to the RecA family.

Its subcellular location is the cytoplasm. In terms of biological role, can catalyze the hydrolysis of ATP in the presence of single-stranded DNA, the ATP-dependent uptake of single-stranded DNA by duplex DNA, and the ATP-dependent hybridization of homologous single-stranded DNAs. It interacts with LexA causing its activation and leading to its autocatalytic cleavage. The polypeptide is Protein RecA (Mesoplasma florum (strain ATCC 33453 / NBRC 100688 / NCTC 11704 / L1) (Acholeplasma florum)).